Reading from the N-terminus, the 289-residue chain is MIAGTRGSRLALVQTNHVIEMLSEVCKEKIEKKIIKTKGDRIRDSQLYSMDSRGLFTRELDMAVLNEEVDLAVHSLKDVPSDLDPDLAIAAVPPRESPAEVLVSRLDWEDLPQGSKLGTSSLRREAFCNHHQKNFKMEPLRGNIDTRIRKVMDGEVHATIMAEAGLKRLGLEEHIKRRFPVEYFTPAAGQGALAVITRADSELISSIGRITHHPSLQEVTAEKTLLRELGAGCQCPLGVIGRATGNQLTLYAVLLTREGEMLRKVTVRGPLAEAEDIGKKAAKEMEDYI.

C233 bears the S-(dipyrrolylmethanemethyl)cysteine mark.

It belongs to the HMBS family. The cofactor is dipyrromethane.

It catalyses the reaction 4 porphobilinogen + H2O = hydroxymethylbilane + 4 NH4(+). Its pathway is porphyrin-containing compound metabolism; protoporphyrin-IX biosynthesis; coproporphyrinogen-III from 5-aminolevulinate: step 2/4. Its function is as follows. Tetrapolymerization of the monopyrrole PBG into the hydroxymethylbilane pre-uroporphyrinogen in several discrete steps. This is Probable porphobilinogen deaminase (hemC) from Methanothermobacter thermautotrophicus (strain ATCC 29096 / DSM 1053 / JCM 10044 / NBRC 100330 / Delta H) (Methanobacterium thermoautotrophicum).